A 419-amino-acid chain; its full sequence is Tubby-like protein 4 (419 aa).

The disordered stretch occupies residues 1–96 (MAATKREPLR…EREEEEEGSS (96 aa)). Over residues 33 to 57 (AKEKEKENEVPTEIGRGKDGGEKKP) the composition is skewed to basic and acidic residues.

This sequence belongs to the TUB family.

This chain is Tubby-like protein 4 (TULP4), found in Oryza sativa subsp. japonica (Rice).